Reading from the N-terminus, the 316-residue chain is Ornithine carbamoyltransferase (316 aa).

Carbamoyl phosphate is bound by residues 57-60, Q84, R108, and 135-138; these read STRT and HPCQ. L-ornithine is bound by residues N166, D230, and 234–235; that span reads SM. Carbamoyl phosphate contacts are provided by residues 269–270 and R297; that span reads CL.

Belongs to the aspartate/ornithine carbamoyltransferase superfamily. OTCase family.

It localises to the cytoplasm. The catalysed reaction is carbamoyl phosphate + L-ornithine = L-citrulline + phosphate + H(+). Its pathway is amino-acid biosynthesis; L-arginine biosynthesis; L-arginine from L-ornithine and carbamoyl phosphate: step 1/3. Reversibly catalyzes the transfer of the carbamoyl group from carbamoyl phosphate (CP) to the N(epsilon) atom of ornithine (ORN) to produce L-citrulline. In Bacillus cereus (strain ZK / E33L), this protein is Ornithine carbamoyltransferase.